The following is a 1026-amino-acid chain: Multidrug resistance protein MdtC (1026 aa).

10 helical membrane-spanning segments follow: residues 12–34, 336–353, 360–382, 431–450, 463–485, 525–547, 853–875, 895–917, 948–970, and 985–1007; these read VATL…LLPV, QSLI…FLFL, AIPA…LCGF, VGFT…LPLL, FAVT…TPML, HARW…YISI, LLLI…ESYV, LEWF…IGIV, LLRF…PLVL, and TIVG…VYLF.

It belongs to the resistance-nodulation-cell division (RND) (TC 2.A.6) family. MdtC subfamily. Part of a tripartite efflux system composed of MdtA, MdtB and MdtC. MdtC forms a heteromultimer with MdtB.

The protein resides in the cell inner membrane. The sequence is that of Multidrug resistance protein MdtC from Pectobacterium atrosepticum (strain SCRI 1043 / ATCC BAA-672) (Erwinia carotovora subsp. atroseptica).